Consider the following 805-residue polypeptide: Transmembrane channel-like protein 6 (805 aa).

The tract at residues 1-29 (MAQPLAFILDVPETPGDQGQGPSPYDESE) is disordered. Residues 1–209 (MAQPLAFILD…SCCGRLRYAC (209 aa)) lie on the Lumenal side of the membrane. Threonine 89 is subject to Phosphothreonine. Arginine 94 carries the omega-N-methylarginine modification. An N-linked (GlcNAc...) asparagine glycan is attached at asparagine 103. At threonine 105 the chain carries Phosphothreonine. The helical transmembrane segment at 210–230 (VLALHSLGLALLSALQALMPW) threads the bilayer. Residues 231–249 (RYALKRIGGQFGSSVLSYF) are Cytoplasmic-facing. Residues 250–270 (LFLKTLLAFNALLLLLLVAFI) form a helical membrane-spanning segment. The Lumenal segment spans residues 271–338 (MGPQVAFPPA…TPRVGGLPYN (68 aa)). Residue asparagine 312 is glycosylated (N-linked (GlcNAc...) asparagine). A helical transmembrane segment spans residues 339–359 (MPLAYLSTVGVSFFITCITLV). Topologically, residues 360–431 (YSMAHSFGES…RSVCGRLRQA (72 aa)) are cytoplasmic. Residues 432–452 (AVLGLVWLLCLGTALGCAVAV) form a helical membrane-spanning segment. Over 453-469 (HVFSEFMIQSPEAAGQE) the chain is Lumenal. A helical membrane pass occupies residues 470 to 490 (AVLLVLPLVVGLLNLGAPYLC). Over 491-505 (RVLAALEPHDSPVLE) the chain is Cytoplasmic. A helical membrane pass occupies residues 506–526 (VYVAICRNLILKLAILGTLCY). The Lumenal segment spans residues 527 to 553 (HWLGRRVGVLQGQCWEDFVGQELYRFL). A helical transmembrane segment spans residues 554–574 (VMDFVLMLLDTLFGELVWRII). At 575–604 (SEKKLKRRRKPEFDIARNVLELIYGQTLTW) the chain is on the cytoplasmic side. The helical transmembrane segment at 605 to 625 (LGVLFSPLLPAVQIIKLLLVF) threads the bilayer. The Lumenal segment spans residues 626-650 (YVKKTSLLANCQAPRRPWLASHMST). The chain crosses the membrane as a helical span at residues 651-671 (VFLTLLCFPAFLGAAVFLCYA). At 672 to 722 (VWQVKPSSTCGPFRTLDTMYEAGRVWVRHLEAAGPRVSWLPWVHRYLMENT) the chain is on the cytoplasmic side. The chain crosses the membrane as a helical span at residues 723–743 (FFVFLVSALLLAVIYLNIQVV). The Lumenal segment spans residues 744–805 (RGQRKVICLL…PALLTDEQDA (62 aa)). The disordered stretch occupies residues 778-805 (KEREERSRVGTTEEAAAPPALLTDEQDA).

This sequence belongs to the TMC family. As to quaternary structure, interacts with TMC8. Interacts and forms a complex with TMC8 and CIB1; the interaction stabilizes each component of the complex. Interacts and forms a complex with TMC8 and SLC30A1/ZNT1; the interaction regulates zinc transport into the ER. (Microbial infection) Interacts with human papillomavirus 16/HPV16 protein E5; the interaction alleviates TMC6-mediated transcription factors inhibition. Expressed in placenta, prostate, testis, activated T-lymphocytes and lymphokine-activated killer (LAK) lymphocytes.

The protein resides in the endoplasmic reticulum membrane. It localises to the golgi apparatus membrane. The protein localises to the nucleus membrane. Functionally, acts as a regulatory protein involved in the regulation of numerous cellular processes. Together with its homolog TMC8/EVER2, forms a complex with CIB1 in lymphocytes and keratynocytes where TMC6 and TMC8 stabilize CIB1 and reciprocally. Together with TMC8, also forms a complex with and activates zinc transporter ZNT1 at the ER membrane of keratynocytes, thereby facilitating zinc uptake into the ER. Down-regulates the activity of transcription factors induced by zinc and cytokines. Also plays a role in thermal sensation by inhibiting the M-channel (KCNQ2-KCNQ3 channel) current in primary sensory neurons. This Homo sapiens (Human) protein is Transmembrane channel-like protein 6.